The chain runs to 457 residues: Na(+)/H(+) antiporter NhaA (457 aa).

11 consecutive transmembrane segments (helical) span residues 33 to 53, 76 to 96, 114 to 134, 142 to 162, 172 to 192, 196 to 216, 235 to 255, 308 to 328, 349 to 369, 385 to 405, and 419 to 439; these read ASGIVLLSCAVAALALANSPL, FSLAMLVNDGLMTIFFFVVGM, LLPLVAALGGMAVPAAIFLAF, AGWGVPMATDIAFCVGVLTLL, VFVTALAIFDDIGGILVIALF, GLQLTWLAAAGGLTAALALMS, YALHHGGIHATIAGVIAGLAI, FVHALHPWVAFAIMPVFALAN, TALALFAGKLVGIFCCTWIAV, LIGVSAVAGIGFTVALFIAGL, and VGILAGSLVSGVVGALVLRLT.

Belongs to the NhaA Na(+)/H(+) (TC 2.A.33) antiporter family.

It localises to the cell inner membrane. The enzyme catalyses Na(+)(in) + 2 H(+)(out) = Na(+)(out) + 2 H(+)(in). In terms of biological role, na(+)/H(+) antiporter that extrudes sodium in exchange for external protons. This Anaeromyxobacter sp. (strain Fw109-5) protein is Na(+)/H(+) antiporter NhaA.